We begin with the raw amino-acid sequence, 125 residues long: Putative zinc finger A20 and AN1 domain-containing stress-associated protein 8 (125 aa).

The A20-type zinc finger occupies 2–36 (TGEPSLCIRGCGFFSTSQTKNLCSKCYNDFLKDES). Residues Cys-8, Cys-12, Cys-24, Cys-27, Cys-80, Cys-82, His-96, and Cys-98 each coordinate Zn(2+). Residues 61–106 (LGSKGGCACKKKVGLLGFHCRCGHLFFASHRYPEEHSCPSDYKSAA) form an AN1-type; degenerate zinc finger.

Its function is as follows. May be involved in environmental stress response. This chain is Putative zinc finger A20 and AN1 domain-containing stress-associated protein 8 (SAP8), found in Arabidopsis thaliana (Mouse-ear cress).